A 461-amino-acid polypeptide reads, in one-letter code: Homocitrate synthase (461 aa).

One can recognise a Pyruvate carboxyltransferase domain in the interval 4 to 259; sequence VGILDSTLRE…IEVVKLDKLQ (256 aa). Position 12 (Arg12) interacts with 2-oxoglutarate. Glu13 serves as a coordination point for Mg(2+). Positions 76, 136, and 170 each coordinate 2-oxoglutarate. Positions 198 and 200 each coordinate Mg(2+). Catalysis depends on His292, which acts as the Proton acceptor.

This sequence belongs to the alpha-IPM synthase/homocitrate synthase family. Homocitrate synthase LYS20/LYS21 subfamily. The cofactor is Mg(2+). It depends on Mn(2+) as a cofactor.

It catalyses the reaction acetyl-CoA + 2-oxoglutarate + H2O = (2R)-homocitrate + CoA + H(+). The protein operates within amino-acid biosynthesis; L-lysine biosynthesis via AAA pathway; L-alpha-aminoadipate from 2-oxoglutarate: step 1/5. Its function is as follows. Catalyzes the aldol-type condensation of 2-oxoglutarate with acetyl-CoA to yield homocitrate. Carries out the first step of the alpha-aminoadipate (AAA) lysine biosynthesis pathway. The chain is Homocitrate synthase from Saccharolobus islandicus (strain Y.N.15.51 / Yellowstone #2) (Sulfolobus islandicus).